The following is a 318-amino-acid chain: tRNA-cytidine(32) 2-sulfurtransferase (318 aa).

Positions 52-57 (SGGKDS) match the PP-loop motif motif. Cys-127, Cys-130, and Cys-218 together coordinate [4Fe-4S] cluster.

Belongs to the TtcA family. In terms of assembly, homodimer. Mg(2+) serves as cofactor. The cofactor is [4Fe-4S] cluster.

It is found in the cytoplasm. It catalyses the reaction cytidine(32) in tRNA + S-sulfanyl-L-cysteinyl-[cysteine desulfurase] + AH2 + ATP = 2-thiocytidine(32) in tRNA + L-cysteinyl-[cysteine desulfurase] + A + AMP + diphosphate + H(+). Its pathway is tRNA modification. Catalyzes the ATP-dependent 2-thiolation of cytidine in position 32 of tRNA, to form 2-thiocytidine (s(2)C32). The sulfur atoms are provided by the cysteine/cysteine desulfurase (IscS) system. The sequence is that of tRNA-cytidine(32) 2-sulfurtransferase from Actinobacillus pleuropneumoniae serotype 7 (strain AP76).